The following is a 238-amino-acid chain: MSTTVLPPPDKKAEYVERMFSRIAPGYDTMNGIITLGLDREWRATTVALAAPPSCGRALDIGTGTGDFLVELTAWMPDGLAVGVDFTVPMMRAGLPKIRDRRAVFVAGDALKLPFADESFDAITTGFTLRNVTDIAAAFREMWRVARVGATVACLEVARPRHPLLRAGHWFYFQRIVPLMARALGADPEAYTYLPQSARIFPPPEELAQIMRAAGWSDVTYRLVGLGAAAIHTGIKRG.

S-adenosyl-L-methionine-binding positions include threonine 65, aspartate 85, and 109-110; that span reads DA.

This sequence belongs to the class I-like SAM-binding methyltransferase superfamily. MenG/UbiE family.

It carries out the reaction a 2-demethylmenaquinol + S-adenosyl-L-methionine = a menaquinol + S-adenosyl-L-homocysteine + H(+). It functions in the pathway quinol/quinone metabolism; menaquinone biosynthesis; menaquinol from 1,4-dihydroxy-2-naphthoate: step 2/2. Functionally, methyltransferase required for the conversion of demethylmenaquinol (DMKH2) to menaquinol (MKH2). In Roseiflexus sp. (strain RS-1), this protein is Demethylmenaquinone methyltransferase.